An 82-amino-acid chain; its full sequence is Small ribosomal subunit protein bS16 (82 aa).

Belongs to the bacterial ribosomal protein bS16 family.

In Histophilus somni (strain 2336) (Haemophilus somnus), this protein is Small ribosomal subunit protein bS16.